The chain runs to 559 residues: Podocan-like protein 1 (559 aa).

The N-terminal stretch at 1 to 20 is a signal peptide; it reads MRPQELLLLLLMLKWSLAHT. N-linked (GlcNAc...) asparagine glycosylation occurs at Asn-64. LRR repeat units follow at residues 66-89, 90-115, 117-139, 140-160, 161-186, 188-208, 209-231, 233-257, 258-281, 283-302, 303-328, 329-352, 354-373, 374-399, 400-423, 425-444, 445-470, 471-494, 496-515, and 517-541; these read TRAARHLSLQNNQLRELPYNELSR, LSGLRTLDLHSNLITSEGLPDEAFES, NQLENFYVAHNKLSVAPQFLPRS, LRVADLAANEVVEIFPLTFGE, KPALRSVYLHNNRLRNTGLPPNTFHG, EVITTLSLSSNQLSYLPPSLP, ASLERLHLQNNLISKVPRGALSL, THLRELYLQHNQLTDSGLDATTFSK, LSSLEYLDLSHNQLATVPEGLPGT, TILHLGRNCIRHVEAVRLHK, ARGLRYLLLQHNKLGASALPKGTLRP, LRALHTLHLYGNKLERVPPALPRH, QALVMPHNHVAALGARDLVS, ARALAELNLAYNSLASAHVHPSAFRR, LRALRSLDLAGNQLTRLPEGLPAS, RSLRLQRNQLRTLEPEQLAG, LNKLRELNLAHNRLRVGDIGPGTWHE, LQALKVLDLSHNELSFVPPDLPEA, EELYLQANRISHVGPEAFLS, and PHLRALFLRANRLHMTSIRAEALQG.

The protein belongs to the small leucine-rich proteoglycan (SLRP) family. SLRP class V subfamily. In terms of processing, N-glycosylated. As to expression, detected in bone where it is expressed in osteoblasts and newly formed bone matrix (at protein level). Also expressed weakly in osteoclasts (at protein level). Expressed strongly in calvaria, lung and femur, and weakly in kidney.

Its subcellular location is the secreted. It is found in the extracellular space. The protein resides in the extracellular matrix. The chain is Podocan-like protein 1 from Mus musculus (Mouse).